Here is a 246-residue protein sequence, read N- to C-terminus: Pyridoxine 5'-phosphate synthase (246 aa).

2 residues coordinate 3-amino-2-oxopropyl phosphate: Asn8 and Arg19. His44 (proton acceptor) is an active-site residue. Positions 46 and 51 each coordinate 1-deoxy-D-xylulose 5-phosphate. Glu76 (proton acceptor) is an active-site residue. Thr106 is a binding site for 1-deoxy-D-xylulose 5-phosphate. His198 functions as the Proton donor in the catalytic mechanism. 3-amino-2-oxopropyl phosphate-binding positions include Asp199 and 221–222; that span reads GH.

This sequence belongs to the PNP synthase family. Homooctamer; tetramer of dimers.

The protein localises to the cytoplasm. It carries out the reaction 3-amino-2-oxopropyl phosphate + 1-deoxy-D-xylulose 5-phosphate = pyridoxine 5'-phosphate + phosphate + 2 H2O + H(+). It participates in cofactor biosynthesis; pyridoxine 5'-phosphate biosynthesis; pyridoxine 5'-phosphate from D-erythrose 4-phosphate: step 5/5. In terms of biological role, catalyzes the complicated ring closure reaction between the two acyclic compounds 1-deoxy-D-xylulose-5-phosphate (DXP) and 3-amino-2-oxopropyl phosphate (1-amino-acetone-3-phosphate or AAP) to form pyridoxine 5'-phosphate (PNP) and inorganic phosphate. This chain is Pyridoxine 5'-phosphate synthase, found in Brucella abortus (strain S19).